The following is a 468-amino-acid chain: ATP synthase subunit beta (468 aa).

155–162 (GGAGVGKT) is a binding site for ATP.

Belongs to the ATPase alpha/beta chains family. F-type ATPases have 2 components, CF(1) - the catalytic core - and CF(0) - the membrane proton channel. CF(1) has five subunits: alpha(3), beta(3), gamma(1), delta(1), epsilon(1). CF(0) has three main subunits: a(1), b(2) and c(9-12). The alpha and beta chains form an alternating ring which encloses part of the gamma chain. CF(1) is attached to CF(0) by a central stalk formed by the gamma and epsilon chains, while a peripheral stalk is formed by the delta and b chains.

It is found in the cell membrane. The catalysed reaction is ATP + H2O + 4 H(+)(in) = ADP + phosphate + 5 H(+)(out). Produces ATP from ADP in the presence of a proton gradient across the membrane. The catalytic sites are hosted primarily by the beta subunits. This chain is ATP synthase subunit beta, found in Streptococcus pneumoniae serotype 19F (strain G54).